Reading from the N-terminus, the 375-residue chain is Succinyl-diaminopimelate desuccinylase (375 aa).

Histidine 66 is a Zn(2+) binding site. Aspartate 68 is a catalytic residue. Aspartate 99 is a Zn(2+) binding site. Glutamate 133 functions as the Proton acceptor in the catalytic mechanism. The Zn(2+) site is built by glutamate 134, glutamate 162, and histidine 348.

The protein belongs to the peptidase M20A family. DapE subfamily. Homodimer. The cofactor is Zn(2+). Co(2+) is required as a cofactor.

It carries out the reaction N-succinyl-(2S,6S)-2,6-diaminopimelate + H2O = (2S,6S)-2,6-diaminopimelate + succinate. It functions in the pathway amino-acid biosynthesis; L-lysine biosynthesis via DAP pathway; LL-2,6-diaminopimelate from (S)-tetrahydrodipicolinate (succinylase route): step 3/3. Its function is as follows. Catalyzes the hydrolysis of N-succinyl-L,L-diaminopimelic acid (SDAP), forming succinate and LL-2,6-diaminopimelate (DAP), an intermediate involved in the bacterial biosynthesis of lysine and meso-diaminopimelic acid, an essential component of bacterial cell walls. This chain is Succinyl-diaminopimelate desuccinylase, found in Shigella sonnei (strain Ss046).